We begin with the raw amino-acid sequence, 410 residues long: Neuroserpin (410 aa).

The N-terminal stretch at 1 to 16 (MYFLGLLSLLVLPSKA) is a signal peptide. 2 N-linked (GlcNAc...) asparagine glycosylation sites follow: asparagine 157 and asparagine 401.

It belongs to the serpin family. Detected in embryonic ocular vitreous fluid (at protein level). In the embryo present in retina, brain, cerebellum and spinal cord. In adult, predominantly expressed in the brain.

The protein resides in the secreted. The protein localises to the cytoplasmic vesicle. It localises to the secretory vesicle lumen. Its subcellular location is the perikaryon. Its function is as follows. Serine protease inhibitor that inhibits plasminogen activators and plasmin but not thrombin. May be involved in the formation or reorganization of synaptic connections as well as for synaptic plasticity in the adult nervous system. May protect neurons from cell damage by tissue-type plasminogen activator. This chain is Neuroserpin (SERPINI1), found in Gallus gallus (Chicken).